Consider the following 583-residue polypeptide: Peptidyl-prolyl cis-trans isomerase FKBP10 (583 aa).

A signal peptide spans 1–27 (MLRAGPPSHTLLRLPLLQLLLLLLVQA). PPIase FKBP-type domains follow at residues 63 to 151 (GDFV…LDVW), 175 to 263 (SDFV…IDVH), 287 to 375 (GDFM…IDFH), and 400 to 487 (GDFV…VSRE). Asparagine 71, asparagine 183, and asparagine 295 each carry an N-linked (GlcNAc...) asparagine glycan. 2 EF-hand domains span residues 498-533 (WHED…QVSE) and 543-578 (DPEK…DQDR). Residues aspartate 511, asparagine 513, aspartate 515, glutamate 517, glutamate 522, aspartate 556, asparagine 558, aspartate 560, lysine 562, and glutamate 567 each contribute to the Ca(2+) site. The interval 534–583 (GKGRLLPGQDPEKTIGDMFQNQDRNQDGKITAEELKLKSDEDQDRVHEEL) is disordered. Over residues 557–583 (RNQDGKITAEELKLKSDEDQDRVHEEL) the composition is skewed to basic and acidic residues. The Prevents secretion from ER motif lies at 580-583 (HEEL).

Post-translationally, glycosylated and phosphorylated.

Its subcellular location is the endoplasmic reticulum lumen. The enzyme catalyses [protein]-peptidylproline (omega=180) = [protein]-peptidylproline (omega=0). Its activity is regulated as follows. Inhibited by both FK506 and rapamycin, but not by cyclosporin A. Functionally, PPIases accelerate the folding of proteins during protein synthesis. In Bos taurus (Bovine), this protein is Peptidyl-prolyl cis-trans isomerase FKBP10 (FKBP10).